The primary structure comprises 156 residues: Calcium-binding protein A (156 aa).

EF-hand domains lie at 4–39 (AITK…TGSK), 40–75 (DPLR…VAAK), 80–115 (AINN…NNPD), and 118–153 (APLM…YKSL). 18 residues coordinate Ca(2+): Asp17, Asn19, Asp21, Asn23, Glu28, Asp53, Asp55, Asp57, Glu64, Asp93, Asp95, Asp97, Arg99, Glu104, Asp131, Asp133, Asp135, and Glu142.

The polypeptide is Calcium-binding protein A (cbpA) (Dictyostelium discoideum (Social amoeba)).